A 123-amino-acid chain; its full sequence is Fluoride-specific ion channel FluC 1 (123 aa).

Helical transmembrane passes span 1-21 (MVDLLLIGLGGSIGAILRYTL), 34-54 (PLATFLINIIGSFGLGLLYGF), 59-79 (VIWLLLGTGFFGGFTTFSTYI), and 99-119 (LTSIFTGVVFFAAGMWLANFF). Na(+) contacts are provided by glycine 70 and threonine 73.

This sequence belongs to the fluoride channel Fluc/FEX (TC 1.A.43) family.

The protein localises to the cell membrane. The enzyme catalyses fluoride(in) = fluoride(out). With respect to regulation, na(+) is not transported, but it plays an essential structural role and its presence is essential for fluoride channel function. Fluoride-specific ion channel. Important for reducing fluoride concentration in the cell, thus reducing its toxicity. The polypeptide is Fluoride-specific ion channel FluC 1 (Carboxydothermus hydrogenoformans (strain ATCC BAA-161 / DSM 6008 / Z-2901)).